A 166-amino-acid polypeptide reads, in one-letter code: NAD(P)H-quinone oxidoreductase subunit I, chloroplastic (166 aa).

4Fe-4S ferredoxin-type domains lie at 55 to 84 (GRIH…VDWK) and 95 to 124 (LNYS…MTEE). [4Fe-4S] cluster contacts are provided by Cys64, Cys67, Cys70, Cys74, Cys104, Cys107, Cys110, and Cys114.

This sequence belongs to the complex I 23 kDa subunit family. In terms of assembly, NDH is composed of at least 16 different subunits, 5 of which are encoded in the nucleus. The cofactor is [4Fe-4S] cluster.

It localises to the plastid. The protein resides in the chloroplast thylakoid membrane. The enzyme catalyses a plastoquinone + NADH + (n+1) H(+)(in) = a plastoquinol + NAD(+) + n H(+)(out). The catalysed reaction is a plastoquinone + NADPH + (n+1) H(+)(in) = a plastoquinol + NADP(+) + n H(+)(out). In terms of biological role, NDH shuttles electrons from NAD(P)H:plastoquinone, via FMN and iron-sulfur (Fe-S) centers, to quinones in the photosynthetic chain and possibly in a chloroplast respiratory chain. The immediate electron acceptor for the enzyme in this species is believed to be plastoquinone. Couples the redox reaction to proton translocation, and thus conserves the redox energy in a proton gradient. In Palafoxia arida (Spanish needles), this protein is NAD(P)H-quinone oxidoreductase subunit I, chloroplastic.